The primary structure comprises 117 residues: Large ribosomal subunit protein bL19 (117 aa).

Belongs to the bacterial ribosomal protein bL19 family.

This protein is located at the 30S-50S ribosomal subunit interface and may play a role in the structure and function of the aminoacyl-tRNA binding site. In Shewanella piezotolerans (strain WP3 / JCM 13877), this protein is Large ribosomal subunit protein bL19.